We begin with the raw amino-acid sequence, 473 residues long: Pre-mRNA-splicing factor prp5 (473 aa).

WD repeat units follow at residues 161 to 191, 203 to 233, 245 to 275, 287 to 317, 329 to 358, 370 to 399, and 419 to 449; these read GHLG…KIWD, GHIA…KCWD, GHLS…RVWD, GHKS…RLWD, HHKK…KHWK, GHNA…CFWD, and DSEA…KIYK.

It belongs to the WD repeat PRL1/PRL2 family. In terms of assembly, belongs to the 40S cdc5-associated complex (or cwf complex), a spliceosome sub-complex reminiscent of a late-stage spliceosome composed of the U2, U5 and U6 snRNAs and at least brr2, cdc5, cwf2/prp3, cwf3/syf1, cwf4/syf3, cwf5/ecm2, spp42/cwf6, cwf7/spf27, cwf8, cwf9, cwf10, cwf11, cwf12, prp45/cwf13, cwf14, cwf15, cwf16, cwf17, cwf18, cwf19, cwf20, cwf21, cwf22, cwf23, cwf24, cwf25, cwf26, cyp7/cwf27, cwf28, cwf29/ist3, lea1, msl1, prp5/cwf1, prp10, prp12/sap130, prp17, prp22, sap61, sap62, sap114, sap145, slu7, smb1, smd1, smd3, smf1, smg1 and syf2.

It localises to the nucleus. Functionally, required for both cell cycle progression at G2/M and pre-mRNA splicing. Interacts genetically with the PRP4 kinase. This Schizosaccharomyces pombe (strain 972 / ATCC 24843) (Fission yeast) protein is Pre-mRNA-splicing factor prp5 (prp5).